The sequence spans 541 residues: Glucose-6-phosphate isomerase (541 aa).

Glu346 functions as the Proton donor in the catalytic mechanism. Residues His377 and Lys506 contribute to the active site.

It belongs to the GPI family.

Its subcellular location is the cytoplasm. The enzyme catalyses alpha-D-glucose 6-phosphate = beta-D-fructose 6-phosphate. Its pathway is carbohydrate biosynthesis; gluconeogenesis. The protein operates within carbohydrate degradation; glycolysis; D-glyceraldehyde 3-phosphate and glycerone phosphate from D-glucose: step 2/4. Catalyzes the reversible isomerization of glucose-6-phosphate to fructose-6-phosphate. The polypeptide is Glucose-6-phosphate isomerase (Agrobacterium fabrum (strain C58 / ATCC 33970) (Agrobacterium tumefaciens (strain C58))).